The chain runs to 117 residues: Large ribosomal subunit protein bL20c (117 aa).

This sequence belongs to the bacterial ribosomal protein bL20 family.

It localises to the plastid. Its subcellular location is the chloroplast. Its function is as follows. Binds directly to 23S ribosomal RNA and is necessary for the in vitro assembly process of the 50S ribosomal subunit. It is not involved in the protein synthesizing functions of that subunit. In Gossypium hirsutum (Upland cotton), this protein is Large ribosomal subunit protein bL20c.